The chain runs to 258 residues: Phosphoadenosine 5'-phosphosulfate reductase (258 aa).

Cys-244 (nucleophile; cysteine thiosulfonate intermediate) is an active-site residue.

The protein belongs to the PAPS reductase family. CysH subfamily.

The protein resides in the cytoplasm. The catalysed reaction is [thioredoxin]-disulfide + sulfite + adenosine 3',5'-bisphosphate + 2 H(+) = [thioredoxin]-dithiol + 3'-phosphoadenylyl sulfate. The protein operates within sulfur metabolism; hydrogen sulfide biosynthesis; sulfite from sulfate: step 3/3. Its function is as follows. Catalyzes the formation of sulfite from phosphoadenosine 5'-phosphosulfate (PAPS) using thioredoxin as an electron donor. This Vibrio atlanticus (strain LGP32) (Vibrio splendidus (strain Mel32)) protein is Phosphoadenosine 5'-phosphosulfate reductase.